Here is a 20-residue protein sequence, read N- to C-terminus: NLIQLSNMIKCAIPGSQPLF.

This sequence belongs to the phospholipase A2 family. Group I subfamily. Ca(2+) is required as a cofactor. Expressed by the venom gland.

It is found in the secreted. It carries out the reaction a 1,2-diacyl-sn-glycero-3-phosphocholine + H2O = a 1-acyl-sn-glycero-3-phosphocholine + a fatty acid + H(+). Functionally, snake venom phospholipase A2 (PLA2) that exhibits weak enzymatic activity. PLA2 catalyzes the calcium-dependent hydrolysis of the 2-acyl groups in 3-sn-phosphoglycerides. This chain is Phospholipase A2 II-5b, found in Notechis scutatus scutatus (Mainland tiger snake).